The primary structure comprises 684 residues: Threonine--tRNA ligase (684 aa).

Residues 1-66 (MTVPATDSWP…DTDAEVVPVA (66 aa)) form the TGS domain. The tract at residues 261-567 (DHRKLGSELD…LTEHYAGAFP (307 aa)) is catalytic. Zn(2+)-binding residues include C366, H417, and H544.

The protein belongs to the class-II aminoacyl-tRNA synthetase family. As to quaternary structure, homodimer. Zn(2+) is required as a cofactor.

It localises to the cytoplasm. It catalyses the reaction tRNA(Thr) + L-threonine + ATP = L-threonyl-tRNA(Thr) + AMP + diphosphate + H(+). Its function is as follows. Catalyzes the attachment of threonine to tRNA(Thr) in a two-step reaction: L-threonine is first activated by ATP to form Thr-AMP and then transferred to the acceptor end of tRNA(Thr). Also edits incorrectly charged L-seryl-tRNA(Thr). The protein is Threonine--tRNA ligase of Mycobacterium avium (strain 104).